A 240-amino-acid polypeptide reads, in one-letter code: Phosphatidylserine decarboxylase proenzyme (240 aa).

S209 functions as the Schiff-base intermediate with substrate; via pyruvic acid in the catalytic mechanism. A Pyruvic acid (Ser); by autocatalysis modification is found at S209.

It belongs to the phosphatidylserine decarboxylase family. PSD-A subfamily. In terms of assembly, heterodimer of a large membrane-associated beta subunit and a small pyruvoyl-containing alpha subunit. Pyruvate is required as a cofactor. Is synthesized initially as an inactive proenzyme. Formation of the active enzyme involves a self-maturation process in which the active site pyruvoyl group is generated from an internal serine residue via an autocatalytic post-translational modification. Two non-identical subunits are generated from the proenzyme in this reaction, and the pyruvate is formed at the N-terminus of the alpha chain, which is derived from the carboxyl end of the proenzyme. The post-translation cleavage follows an unusual pathway, termed non-hydrolytic serinolysis, in which the side chain hydroxyl group of the serine supplies its oxygen atom to form the C-terminus of the beta chain, while the remainder of the serine residue undergoes an oxidative deamination to produce ammonia and the pyruvoyl prosthetic group on the alpha chain.

The protein resides in the cell membrane. The catalysed reaction is a 1,2-diacyl-sn-glycero-3-phospho-L-serine + H(+) = a 1,2-diacyl-sn-glycero-3-phosphoethanolamine + CO2. The protein operates within phospholipid metabolism; phosphatidylethanolamine biosynthesis; phosphatidylethanolamine from CDP-diacylglycerol: step 2/2. Catalyzes the formation of phosphatidylethanolamine (PtdEtn) from phosphatidylserine (PtdSer). This is Phosphatidylserine decarboxylase proenzyme from Mycobacterium avium (strain 104).